Consider the following 176-residue polypeptide: Mitochondrial inner membrane protein Mpv17 (176 aa).

A run of 4 helical transmembrane segments spans residues 18–38 (VQVL…QQLV), 53–73 (TMAS…YRVL), 94–114 (GGFA…LNGL), and 131–151 (LITN…LVPL).

Belongs to the peroxisomal membrane protein PXMP2/4 family.

The protein localises to the mitochondrion inner membrane. Functionally, non-selective channel that modulates the membrane potential under normal conditions and oxidative stress, and is involved in mitochondrial homeostasis. Involved in mitochondrial deoxynucleoside triphosphates (dNTP) pool homeostasis and mitochondrial DNA (mtDNA) maintenance. May be involved in the regulation of reactive oxygen species metabolism and the control of oxidative phosphorylation. The chain is Mitochondrial inner membrane protein Mpv17 from Bos taurus (Bovine).